We begin with the raw amino-acid sequence, 879 residues long: Alanine--tRNA ligase (879 aa).

4 residues coordinate Zn(2+): H566, H570, C668, and H672.

The protein belongs to the class-II aminoacyl-tRNA synthetase family. Zn(2+) serves as cofactor.

Its subcellular location is the cytoplasm. It carries out the reaction tRNA(Ala) + L-alanine + ATP = L-alanyl-tRNA(Ala) + AMP + diphosphate. Catalyzes the attachment of alanine to tRNA(Ala) in a two-step reaction: alanine is first activated by ATP to form Ala-AMP and then transferred to the acceptor end of tRNA(Ala). Also edits incorrectly charged Ser-tRNA(Ala) and Gly-tRNA(Ala) via its editing domain. The protein is Alanine--tRNA ligase of Clostridium perfringens (strain ATCC 13124 / DSM 756 / JCM 1290 / NCIMB 6125 / NCTC 8237 / Type A).